Consider the following 240-residue polypeptide: 14-3-3 protein 3 (240 aa).

This sequence belongs to the 14-3-3 family. As to quaternary structure, interacts with coactosin. Interacts with ACTO/actophorin.

Its subcellular location is the cytoplasm. It localises to the cell projection. The protein localises to the phagocytic cup. Functionally, adapter protein which is required for phagocytosis and motility, probably by regulating actin cytoskeleton dynamics. During phagocytosis, plays a role in the initiation and/or formation of the phagocytic cup and is involved in the recruitment of the actin binding protein coactosin to the phagocytic cup. This is 14-3-3 protein 3 from Entamoeba histolytica (strain ATCC 30459 / HM-1:IMSS / ABRM).